The chain runs to 441 residues: Importin subunit alpha-8 (441 aa).

ARM repeat units follow at residues 39 to 79, 80 to 118, 121 to 158, 160 to 199, 202 to 241, 244 to 284, 287 to 326, and 330 to 370; these read QRDI…NIAV, DNPG…NVAG, IHYR…NLCR, KPHP…HLSE, EDGI…AMTA, HQQT…NITA, KEQI…NMAL, and HDQI…NMLK.

This sequence belongs to the importin alpha family. Forms a complex with importin subunit beta-1.

It is found in the nucleus envelope. Its function is as follows. Binds to conventional NLS motifs and mediates nuclear protein import across the nuclear envelope. The chain is Importin subunit alpha-8 from Arabidopsis thaliana (Mouse-ear cress).